A 324-amino-acid chain; its full sequence is Viral cathepsin (324 aa).

The first 18 residues, methionine 1–alanine 18, serve as a signal peptide directing secretion. Positions tyrosine 19 to glycine 113 are cleaved as a propeptide — activation peptide. 3 disulfides stabilise this stretch: cysteine 134–cysteine 175, cysteine 168–cysteine 208, and cysteine 263–cysteine 311. The active site involves cysteine 137. A glycan (N-linked (GlcNAc...) asparagine; by host) is linked at asparagine 159. Residues histidine 270 and asparagine 290 contribute to the active site.

Belongs to the peptidase C1 family. In terms of processing, synthesized as an inactive proenzyme and activated by proteolytic removal of the inhibitory propeptide.

The catalysed reaction is Endopeptidase of broad specificity, hydrolyzing substrates of both cathepsin L and cathepsin B.. Functionally, cysteine protease that plays an essential role in host liquefaction to facilitate horizontal transmission of the virus. May participate in the degradation of foreign protein expressed by the baculovirus system. This is Viral cathepsin (Vcath) from Choristoneura fumiferana defective polyhedrosis virus (Cfdef).